The primary structure comprises 176 residues: Adenine phosphoribosyltransferase (176 aa).

This sequence belongs to the purine/pyrimidine phosphoribosyltransferase family. Homodimer.

It is found in the cytoplasm. It carries out the reaction AMP + diphosphate = 5-phospho-alpha-D-ribose 1-diphosphate + adenine. It participates in purine metabolism; AMP biosynthesis via salvage pathway; AMP from adenine: step 1/1. Catalyzes a salvage reaction resulting in the formation of AMP, that is energically less costly than de novo synthesis. This chain is Adenine phosphoribosyltransferase, found in Borrelia garinii subsp. bavariensis (strain ATCC BAA-2496 / DSM 23469 / PBi) (Borreliella bavariensis).